The chain runs to 617 residues: 1-deoxy-D-xylulose-5-phosphate synthase (617 aa).

Residues His-76 and 117–119 (GHS) each bind thiamine diphosphate. Asp-148 is a Mg(2+) binding site. Residues 149–150 (GA), Asn-177, Tyr-285, and Glu-366 each bind thiamine diphosphate. Residue Asn-177 coordinates Mg(2+).

Belongs to the transketolase family. DXPS subfamily. As to quaternary structure, homodimer. Mg(2+) is required as a cofactor. Thiamine diphosphate serves as cofactor.

The catalysed reaction is D-glyceraldehyde 3-phosphate + pyruvate + H(+) = 1-deoxy-D-xylulose 5-phosphate + CO2. The protein operates within metabolic intermediate biosynthesis; 1-deoxy-D-xylulose 5-phosphate biosynthesis; 1-deoxy-D-xylulose 5-phosphate from D-glyceraldehyde 3-phosphate and pyruvate: step 1/1. Its function is as follows. Catalyzes the acyloin condensation reaction between C atoms 2 and 3 of pyruvate and glyceraldehyde 3-phosphate to yield 1-deoxy-D-xylulose-5-phosphate (DXP). In Histophilus somni (strain 2336) (Haemophilus somnus), this protein is 1-deoxy-D-xylulose-5-phosphate synthase.